Consider the following 488-residue polypeptide: UDP-N-acetylmuramate--L-alanine ligase (488 aa).

122–128 (GTHGKTT) contacts ATP.

It belongs to the MurCDEF family.

Its subcellular location is the cytoplasm. The catalysed reaction is UDP-N-acetyl-alpha-D-muramate + L-alanine + ATP = UDP-N-acetyl-alpha-D-muramoyl-L-alanine + ADP + phosphate + H(+). Its pathway is cell wall biogenesis; peptidoglycan biosynthesis. Cell wall formation. The polypeptide is UDP-N-acetylmuramate--L-alanine ligase (Mycobacterium ulcerans (strain Agy99)).